Here is an 844-residue protein sequence, read N- to C-terminus: Janus kinase and microtubule-interacting protein 3 (844 aa).

The stretch at 8–258 (SRAKGDKAEA…QLSQVREADR (251 aa)) forms a coiled coil. The segment at 250–290 (LSQVREADRHPGSPRRELPHAAGAGDASDHSGSPEQQLDEK) is disordered. Residues 254–268 (READRHPGSPRRELP) are compositionally biased toward basic and acidic residues. Residues 269–282 (HAAGAGDASDHSGS) show a composition bias toward low complexity. Positions 289 to 421 (EKDARRFQLK…DELSKTLETA (133 aa)) form a coiled coil. S384 carries the post-translational modification Phosphoserine. Positions 466–483 (SDGSSVSYQTDRTDQTPC) are enriched in polar residues. The tract at residues 466-489 (SDGSSVSYQTDRTDQTPCTPDDDL) is disordered. Coiled-coil stretches lie at residues 493–621 (MAKE…RERK) and 683–834 (VLTL…FLFL).

This sequence belongs to the JAKMIP family. In terms of tissue distribution, specifically expressed in the CNS and endocrine tissues. Also detected in other tissues including heart, testis and prostate.

The protein resides in the golgi apparatus. The polypeptide is Janus kinase and microtubule-interacting protein 3 (JAKMIP3) (Homo sapiens (Human)).